Here is a 499-residue protein sequence, read N- to C-terminus: uncharacterized protein (499 aa).

Residues Cys-10–Arg-57 form an RING-type; degenerate zinc finger. A B box-type; degenerate zinc finger spans residues Asn-101 to Ile-147.

This is an uncharacterized protein from Caenorhabditis elegans.